The primary structure comprises 242 residues: tRNA (guanine-N(1)-)-methyltransferase (242 aa).

Residues G114 and 134 to 139 contribute to the S-adenosyl-L-methionine site; that span reads IGDFVL. The span at 223-233 shows a compositional bias: basic and acidic residues; sequence RRDLLPEHSKN. The interval 223–242 is disordered; it reads RRDLLPEHSKNNPEQTNKLS.

The protein belongs to the RNA methyltransferase TrmD family. As to quaternary structure, homodimer.

It is found in the cytoplasm. The catalysed reaction is guanosine(37) in tRNA + S-adenosyl-L-methionine = N(1)-methylguanosine(37) in tRNA + S-adenosyl-L-homocysteine + H(+). In terms of biological role, specifically methylates guanosine-37 in various tRNAs. The protein is tRNA (guanine-N(1)-)-methyltransferase of Rhodopirellula baltica (strain DSM 10527 / NCIMB 13988 / SH1).